A 37-amino-acid polypeptide reads, in one-letter code: Photosystem II reaction center protein T (37 aa).

The chain crosses the membrane as a helical span at residues 3-23; sequence ALVYTFLLVSTLGIIFFAIFF.

The protein belongs to the PsbT family. In terms of assembly, PSII is composed of 1 copy each of membrane proteins PsbA, PsbB, PsbC, PsbD, PsbE, PsbF, PsbH, PsbI, PsbJ, PsbK, PsbL, PsbM, PsbT, PsbY, PsbZ, Psb30/Ycf12, at least 3 peripheral proteins of the oxygen-evolving complex and a large number of cofactors. It forms dimeric complexes.

The protein localises to the plastid. Its subcellular location is the chloroplast thylakoid membrane. In terms of biological role, found at the monomer-monomer interface of the photosystem II (PS II) dimer, plays a role in assembly and dimerization of PSII. PSII is a light-driven water plastoquinone oxidoreductase, using light energy to abstract electrons from H(2)O, generating a proton gradient subsequently used for ATP formation. The protein is Photosystem II reaction center protein T of Cucumis sativus (Cucumber).